The primary structure comprises 515 residues: Envelope glycoprotein (515 aa).

The N-terminal stretch at 1-33 is a signal peptide; that stretch reads MPKERRSRRRPQPIIRWVSLTLTLLALCQPIQT. The Extracellular segment spans residues 34 to 436; that stretch reads WRCSLSLGNQ…GLTAWVRETI (403 aa). N-linked (GlcNAc...) asparagine; by host glycosylation is found at Asn129 and Asn203. A CXXC motif is present at residues 212–215; sequence CAIC. 3 cysteine pairs are disulfide-bonded: Cys212-Cys215, Cys212-Cys392, and Cys384-Cys391. Asn230, Asn251, Asn256, Asn271, and Asn287 each carry an N-linked (GlcNAc...) asparagine; by host glycan. The interval 304–324 is fusion peptide; that stretch reads VAALTLGLALSVGLTGINVAV. 2 coiled-coil regions span residues 330 to 376 and 388 to 420; these read QRLT…WLYI and NEPC…DWQW. The N-linked (GlcNAc...) asparagine; by host glycan is linked to Asn351. Residues 365 to 381 are immunosuppression; the sequence is AQNRRGLDWLYIRLGFQ. A CX6CC motif is present at residues 384-392; it reads CPTINEPCC. An N-linked (GlcNAc...) asparagine; by host glycan is attached at Asn398. A helical transmembrane segment spans residues 437 to 457; sequence HSVLSLFLLALFLLFLAPCLI. The S-palmitoyl cysteine; by host moiety is linked to residue Cys455. Over 458-515 the chain is Cytoplasmic; sequence KCLTSRLLKLLRQAPHFPEISFPPKPDSDYQALLPSAPEIYSHLSPTKPDYINLRPCP.

As to quaternary structure, the mature envelope protein (Env) consists of a trimer of SU-TM heterodimers attached by a labile interchain disulfide bond. Post-translationally, specific enzymatic cleavages in vivo yield mature proteins. Envelope glycoproteins are synthesized as an inactive precursor that is N-glycosylated and processed likely by host cell furin or by a furin-like protease in the Golgi to yield the mature SU and TM proteins. The cleavage site between SU and TM requires the minimal sequence [KR]-X-[KR]-R. The CXXC motif is highly conserved across a broad range of retroviral envelope proteins. It is thought to participate in the formation of a labile disulfide bond possibly with the CX6CC motif present in the transmembrane protein. Isomerization of the intersubunit disulfide bond to an SU intrachain disulfide bond is thought to occur upon receptor recognition in order to allow membrane fusion. In terms of processing, the transmembrane protein is palmitoylated.

It localises to the virion membrane. It is found in the host cell membrane. Functionally, the surface protein (SU) attaches the virus to the host cell by binding to its receptor. This interaction triggers the refolding of the transmembrane protein (TM) and is thought to activate its fusogenic potential by unmasking its fusion peptide. Fusion occurs at the host cell plasma membrane. The transmembrane protein (TM) acts as a class I viral fusion protein. Under the current model, the protein has at least 3 conformational states: pre-fusion native state, pre-hairpin intermediate state, and post-fusion hairpin state. During viral and target cell membrane fusion, the coiled coil regions (heptad repeats) assume a trimer-of-hairpins structure, positioning the fusion peptide in close proximity to the C-terminal region of the ectodomain. The formation of this structure appears to drive apposition and subsequent fusion of viral and target cell membranes. Membranes fusion leads to delivery of the nucleocapsid into the cytoplasm. This Bos taurus (Bovine) protein is Envelope glycoprotein (env).